Reading from the N-terminus, the 513-residue chain is Glycine/sarcosine/betaine reductase complex component C subunit beta (513 aa).

As to quaternary structure, heterooctamer of four alpha and four beta subunits. Component of the glycine, sarcosine and betaine reductase complexes, together with proteins A and B.

The catalysed reaction is acetyl phosphate + [thioredoxin]-disulfide + NH4(+) + H2O = [thioredoxin]-dithiol + glycine + phosphate + H(+). It catalyses the reaction acetyl phosphate + methylamine + [thioredoxin]-disulfide + H2O = sarcosine + [thioredoxin]-dithiol + phosphate + H(+). The enzyme catalyses acetyl phosphate + trimethylamine + [thioredoxin]-disulfide + H2O = glycine betaine + [thioredoxin]-dithiol + phosphate + H(+). In terms of biological role, in the first step of glycine, betaine and sarcosine reductases, the substrate is bound to component PB via a Schiff base intermediate. Then the PB-activated substrate is nucleophilically attacked by the selenol anion of component PA to transform it to a carboxymethylated selenoether and the respective amine. By action of component PC, acetyl phosphate is formed, leaving component PA in its oxidized state. Finally component PA becomes reduced by the thioredoxin system to start a new catalytic cycle of reductive deamination. The sequence is that of Glycine/sarcosine/betaine reductase complex component C subunit beta (grdC) from Peptoclostridium acidaminophilum (Eubacterium acidaminophilum).